The chain runs to 163 residues: Nucleotide-binding protein Acel_0286 (163 aa).

Belongs to the YajQ family.

In terms of biological role, nucleotide-binding protein. In Acidothermus cellulolyticus (strain ATCC 43068 / DSM 8971 / 11B), this protein is Nucleotide-binding protein Acel_0286.